An 809-amino-acid chain; its full sequence is Lethal factor (809 aa).

The first 33 residues, 1–33 (MNIKKEFIKVISMSCLVTAITLSGPVFIPLVQG), serve as a signal peptide directing secretion. Residues 39–66 (DVGMHVKEKEKNKDENKRKDEERNKTQE) are disordered. Basic and acidic residues predominate over residues 40–66 (VGMHVKEKEKNKDENKRKDEERNKTQE). The tract at residues 60-295 (ERNKTQEEHL…NLSLEELKDQ (236 aa)) is i; PA-binding region. Residues 70–282 (KEIMKHIVKI…AFNYMDKFNE (213 aa)) enclose the ATLF-like 1 domain. The IIA stretch occupies residues 296 to 330 (RMLARYEKWEKIKQHYQHWSDSLSEEGRGLLKKLQ). 5 consecutive repeat copies span residues 315–333 (SDSL…QIPI), 342–357 (HSLS…RIQI), 360–378 (SDFL…QIDI), 380–397 (DSLS…QVDS), and 399–416 (NPLS…KLDI). Residues 315-416 (SDSLSEEGRG…EFLKKLKLDI (102 aa)) are 5 X approximate repeats. The tract at residues 336–416 (KKDDIIHSLS…EFLKKLKLDI (81 aa)) is III. Residues 420 to 583 (DINQRLQDTG…EYIRIDAKVV (164 aa)) are IIB. Residues 585–809 (KSKIDTKIQE…NDQIKFIINS (225 aa)) form an IV region. In terms of domain architecture, ATLF-like 2 spans 609 to 804 (LPKYTKLITF…TFQFINDQIK (196 aa)). H719 lines the Zn(2+) pocket. E720 (proton acceptor) is an active-site residue. Zn(2+) contacts are provided by H723, Y761, and E768.

This sequence belongs to the peptidase M34 family. Interacts (via ATLF domain 1) with the cleaved form of protective antigen (PA-63) anthrax toxin; interaction is required for LF translocation into the host cytoplasm. Interacts with PA-63 homooligomers (either homoheptamers or homooctamers): three molecules of LF bind the PA-63 homoheptamer to form the PA(7)LF(3) complex, in which the relative position of the N-terminal alpha-helices in the three LFs determines which factor is translocated first. Requires Zn(2+) as cofactor.

The protein resides in the secreted. Its subcellular location is the host cytoplasm. The protein localises to the host cytosol. The catalysed reaction is Preferred amino acids around the cleavage site can be denoted BBBBxHx-|-H, in which B denotes Arg or Lys, H denotes a hydrophobic amino acid, and x is any amino acid. The only known protein substrates are mitogen-activated protein (MAP) kinase kinases.. Inhibited by NSC-12155 (1,3-Bis(2-methyl-4-aminoquinoline-6-yl)ure). Inhibited by phenoxyacetic acid bearing alpha-benzyl substituents on the C2-side chain. Inhibited by sulfonamide hydroxamate with benzylic additions at the sulfonamide nitrogen. Also inhibited by sulfonamide hydroxamates with alkylation at the sulfonamide nitrogen. Inhibited by hydroxamic acid inhibitors. Its function is as follows. Lethal factor (LF), which constitutes one of the three proteins composing the anthrax toxin, is able to trigger rapid cell death in macrophages. Acts as a protease that cleaves the N-terminal of most dual specificity mitogen-activated protein kinase kinases (MAPKKs or MAP2Ks) (except for MAP2K5): cleavage invariably occurs within the N-terminal proline-rich region preceding the kinase domain, thus disrupting a sequence involved in directing specific protein-protein interactions necessary for the assembly of signaling complexes. Also cleaves mouse Nlrp1b: host Nlrp1b cleavage promotes ubiquitination and degradation of the N-terminal part of Nlrp1b by the proteasome, thereby releasing the cleaved C-terminal part of Nlrp1b, which polymerizes and forms the Nlrp1b inflammasome followed by host cell pyroptosis. Able to cleave mouse Nlrp1b alleles 1 and 5, while it is not able to cleave Nlrp1b alleles 2, 3 and 4. In contrast, does not cleave NLRP1 human ortholog. LF is not toxic by itself and only acts as a lethal factor when associated with protective antigen (PA) to form the lethal toxin (LeTx): PA is required for LF translocation into the host cytosol. The protein is Lethal factor of Bacillus anthracis.